Here is a 350-residue protein sequence, read N- to C-terminus: Nicotinate-nucleotide--dimethylbenzimidazole phosphoribosyltransferase (350 aa).

Glu317 functions as the Proton acceptor in the catalytic mechanism.

This sequence belongs to the CobT family.

It carries out the reaction 5,6-dimethylbenzimidazole + nicotinate beta-D-ribonucleotide = alpha-ribazole 5'-phosphate + nicotinate + H(+). It functions in the pathway nucleoside biosynthesis; alpha-ribazole biosynthesis; alpha-ribazole from 5,6-dimethylbenzimidazole: step 1/2. Its function is as follows. Catalyzes the synthesis of alpha-ribazole-5'-phosphate from nicotinate mononucleotide (NAMN) and 5,6-dimethylbenzimidazole (DMB). The sequence is that of Nicotinate-nucleotide--dimethylbenzimidazole phosphoribosyltransferase from Shewanella sp. (strain MR-7).